Reading from the N-terminus, the 459-residue chain is Ribulose bisphosphate carboxylase large chain (459 aa).

K4 is modified (N6,N6,N6-trimethyllysine). Residues N113 and T163 each coordinate substrate. K165 functions as the Proton acceptor in the catalytic mechanism. K167 is a substrate binding site. Mg(2+) contacts are provided by K191, D193, and E194. At K191 the chain carries N6-carboxylysine. The Proton acceptor role is filled by H284. Substrate contacts are provided by R285, H317, and S369.

The protein belongs to the RuBisCO large chain family. Type I subfamily. In terms of assembly, heterohexadecamer of 8 large chains and 8 small chains; disulfide-linked. The disulfide link is formed within the large subunit homodimers. Mg(2+) is required as a cofactor. Post-translationally, the disulfide bond which can form in the large chain dimeric partners within the hexadecamer appears to be associated with oxidative stress and protein turnover.

The protein resides in the plastid. It localises to the chloroplast. The enzyme catalyses 2 (2R)-3-phosphoglycerate + 2 H(+) = D-ribulose 1,5-bisphosphate + CO2 + H2O. It carries out the reaction D-ribulose 1,5-bisphosphate + O2 = 2-phosphoglycolate + (2R)-3-phosphoglycerate + 2 H(+). In terms of biological role, ruBisCO catalyzes two reactions: the carboxylation of D-ribulose 1,5-bisphosphate, the primary event in carbon dioxide fixation, as well as the oxidative fragmentation of the pentose substrate in the photorespiration process. Both reactions occur simultaneously and in competition at the same active site. In Geum quellyon (Chilean avens), this protein is Ribulose bisphosphate carboxylase large chain.